Reading from the N-terminus, the 507-residue chain is E3 SUMO-protein ligase PIAS4 (507 aa).

Alanine 2 bears the N-acetylalanine mark. Lysine 9 participates in a covalent cross-link: Glycyl lysine isopeptide (Lys-Gly) (interchain with G-Cter in SUMO2). One can recognise an SAP domain in the interval 12–46 (VMSFRVSDLQMLLGFVGRSKSGLKHELVTRALQLV). Positions 20-24 (LQMLL) match the LXXLL motif motif. Lysine 35 participates in a covalent cross-link: Glycyl lysine isopeptide (Lys-Gly) (interchain with G-Cter in SUMO); alternate. Lysine 35 is covalently cross-linked (Glycyl lysine isopeptide (Lys-Gly) (interchain with G-Cter in SUMO2); alternate). Glycyl lysine isopeptide (Lys-Gly) (interchain with G-Cter in SUMO2) cross-links involve residues lysine 56, lysine 59, lysine 68, and lysine 69. At lysine 107 the chain carries N6-acetyllysine. Residues 112–272 (LGRLPTKTLK…SVALYLVRQL (161 aa)) form the PINIT domain. A Glycyl lysine isopeptide (Lys-Gly) (interchain with G-Cter in SUMO2) cross-link involves residue lysine 118. Lysine 128 participates in a covalent cross-link: Glycyl lysine isopeptide (Lys-Gly) (interchain with G-Cter in SUMO). Residues 304–385 (PDSEIATTGV…LSKILSECEG (82 aa)) form an SP-RING-type zinc finger. The Zn(2+) site is built by cysteine 335, histidine 337, cysteine 358, and cysteine 361. The interval 426–507 (APASSTPGIG…PFQKGLVPAC (82 aa)) is disordered. The span at 434-450 (IGSGLSGPGSAGSGAGA) shows a compositional bias: gly residues. The segment covering 474 to 489 (SEDEDEDEDDDEDEDE) has biased composition (acidic residues).

It belongs to the PIAS family. In terms of assembly, interacts with AR, GATA2, LEF1, TP53 and STAT1 (IFNG-induced). Interacts with TICAM1. Interacts with MTA1. Interacts with PRDM1/Blimp-1. Interacts with TRIM32 upon treatment with UVB and TNF-alpha. (Microbial infection) Interacts ewith Moloney murine leukemia virus Capsid protein p30. Post-translationally, sumoylated. Lys-35 is the main site of sumoylation. Sumoylation is required for TCF4 sumoylation and transcriptional activation. Represses LEF1 transcriptional activity. SUMO1 is the preferred conjugate. In terms of processing, ubiquitinated by TRIM32 upon treatment with UVB and TNF-alpha. Widely expressed, with highest levels in testis. Also expressed in vascular endothelial cells, in primary keratinocytes and in the CNS, including cortex, olfactory bulb, spinal cord, thalamus and trigeminal ganglion. Low expression, if any, in liver and lung.

The protein resides in the nucleus. It is found in the PML body. The catalysed reaction is S-ubiquitinyl-[E2 ubiquitin-conjugating enzyme]-L-cysteine + [acceptor protein]-L-lysine = [E2 ubiquitin-conjugating enzyme]-L-cysteine + N(6)-ubiquitinyl-[acceptor protein]-L-lysine.. It functions in the pathway protein modification; protein sumoylation. Functions as an E3-type small ubiquitin-like modifier (SUMO) ligase, stabilizing the interaction between UBE2I and the substrate, and as a SUMO-tethering factor. Mediates sumoylation of ALKBH5, AXIN1, CEBPA, KLF8, GATA2, PARK7, HERC2, MYB, TCF4 and RNF168. Plays a crucial role as a transcriptional coregulation in various cellular pathways, including the STAT pathway, the p53/TP53 pathway, the Wnt pathway and the steroid hormone signaling pathway. Involved in gene silencing. In Wnt signaling, represses LEF1 and enhances TCF4 transcriptional activities through promoting their sumoylations. Enhances the sumoylation of MTA1 and may participate in its paralog-selective sumoylation. Binds to AT-rich DNA sequences, known as matrix or scaffold attachment regions (MARs/SARs). Catalyzes conjugation of SUMO2 to KAT5 in response to DNA damage, facilitating repair of DNA double-strand breaks (DSBs) via homologous recombination (HR). Mediates sumoylation of PARP1 in response to PARP1 trapping to chromatin. Mediates sumoylation of KLF8, repressiing KLF8 transcriptional activity and cell cycle progression into G(1) phase. Sumoylates ALKBH5 downstream of MAPK8/JNK1 and MAPK9/JNK2 in response to reactive oxygen species (ROS), inhibiting ALKBH5 RNA demethylase activity. The sequence is that of E3 SUMO-protein ligase PIAS4 (Pias4) from Mus musculus (Mouse).